A 331-amino-acid polypeptide reads, in one-letter code: Ribose operon repressor (331 aa).

The HTH lacI-type domain occupies 1–56 (MTTIRDVAKHAKVSVATVSRVLNKKGYVSKEAEEAVLQAIKELNYQPSSVARSLYH). Positions 4–23 (IRDVAKHAKVSVATVSRVLN) form a DNA-binding region, H-T-H motif.

In terms of biological role, transcriptional repressor for the ribose rbsDACBK operon. The sequence is that of Ribose operon repressor (rbsR) from Halalkalibacterium halodurans (strain ATCC BAA-125 / DSM 18197 / FERM 7344 / JCM 9153 / C-125) (Bacillus halodurans).